Consider the following 166-residue polypeptide: Deglycase PH1704 (166 aa).

The region spanning 1–166 (MKVLFLTANE…WMREFVKLLK (166 aa)) is the PfpI endopeptidase domain. Cys-100 serves as the catalytic Nucleophile. The active site involves His-101.

Belongs to the peptidase C56 family. As to quaternary structure, homohexamer formed by a dimer of trimers that assemble into a hollow ring structure.

It is found in the cytoplasm. It carries out the reaction N(omega)-(1-hydroxy-2-oxopropyl)-L-arginyl-[protein] + H2O = lactate + L-arginyl-[protein] + H(+). The enzyme catalyses N(6)-(1-hydroxy-2-oxopropyl)-L-lysyl-[protein] + H2O = lactate + L-lysyl-[protein] + H(+). The catalysed reaction is S-(1-hydroxy-2-oxopropyl)-L-cysteinyl-[protein] + H2O = lactate + L-cysteinyl-[protein] + H(+). It catalyses the reaction N(omega)-(1-hydroxy-2-oxoethyl)-L-arginyl-[protein] + H2O = L-arginyl-[protein] + glycolate + H(+). It carries out the reaction N(6)-(1-hydroxy-2-oxoethyl)-L-lysyl-[protein] + H2O = glycolate + L-lysyl-[protein] + H(+). The enzyme catalyses S-(1-hydroxy-2-oxoethyl)-L-cysteinyl-[protein] + H2O = glycolate + L-cysteinyl-[protein] + H(+). Its function is as follows. Deglycase that catalyzes the deglycation of the Maillard adducts formed between amino groups of proteins and reactive carbonyl groups of glyoxals. Thus, functions as a protein deglycase that repairs methylglyoxal- and glyoxal-glycated proteins, and releases repaired proteins and lactate or glycolate, respectively. Deglycates cysteine, arginine and lysine residues in proteins, and thus reactivates these proteins by reversing glycation by glyoxals. Acts on early glycation intermediates (hemithioacetals and aminocarbinols), preventing the formation of advanced glycation endproducts (AGE) that cause irreversible damage. Also displays proteolytic activity. This chain is Deglycase PH1704, found in Pyrococcus horikoshii (strain ATCC 700860 / DSM 12428 / JCM 9974 / NBRC 100139 / OT-3).